A 152-amino-acid polypeptide reads, in one-letter code: UPF0266 membrane protein KPK_1957 (152 aa).

3 helical membrane passes run 6–26 (LVII…QFIM), 45–65 (VDGL…ITQH), and 67–87 (TPIT…LFWI).

The protein belongs to the UPF0266 family.

It is found in the cell inner membrane. In Klebsiella pneumoniae (strain 342), this protein is UPF0266 membrane protein KPK_1957.